A 562-amino-acid chain; its full sequence is MNINVANLLNGNYILLLFVVLALGLCLGKLRLGPIQLGNAIGVLVVSLLLGQQHFTINTEALNLGFMLFIFCVGVEAGPNFFSIFFRDGKNYLMLALVMVGSAMVLALGLGKLFGWDIGLTAGMLAGSMTSTPVLVGAGDTLRHTIANNPALQHAQDNLSLGYALTYLIGLVSLILGARYLPKLQHQDLPTSAQQIARERGLDTDSQRKVYLPVIRAYRVGPELVAWADGKNLRELGIYRQTGCYIERIRRNGILANPDGDAVLQVGDEISLVGYPDAHSRLDPSFRNGKEVFDRDLLDMRIVTEEIVVKNSNAVGKRLSHLKLTDHGCFLNRVIRSQIEMPIDDNVVLNKGDVLQVSGDARRVKSVAEKIGFISIHSQVTDLLAFCAFFILGLMIGLITFQFSNFSFGIGNAAGLLMAGIMLGFLRANHPTFGYIPQGALNMVKEFGLMVFMAGVGLSAGGGINSSLGAVGGQMLISGLIVSLVPVVICFIFGAYVLRMNRALLFGAIMGARTCAPAMDIISDTARSNIPALGYAGTYAIANVLLTLAGSLIVIVWPGILG.

Helical transmembrane passes span 8 to 28 (LLNGNYILLLFVVLALGLCLG), 32 to 52 (LGPIQLGNAIGVLVVSLLLGQ), 66 to 86 (FMLFIFCVGVEAGPNFFSIFF), 94 to 114 (MLALVMVGSAMVLALGLGKLF), 118 to 138 (IGLTAGMLAGSMTSTPVLVGA), and 158 to 178 (NLSLGYALTYLIGLVSLILGA). 2 consecutive RCK C-terminal domains span residues 202–288 (LDTD…SFRN) and 290–373 (KEVF…KIGF). The next 5 membrane-spanning stretches (helical) occupy residues 383–403 (LLAFCAFFILGLMIGLITFQF), 406–426 (FSFGIGNAAGLLMAGIMLGFL), 447–467 (FGLMVFMAGVGLSAGGGINSS), 475–495 (MLISGLIVSLVPVVICFIFGA), and 541–561 (IANVLLTLAGSLIVIVWPGIL).

This sequence belongs to the AAE transporter (TC 2.A.81) family. YbjL subfamily.

The protein localises to the cell membrane. This chain is Putative transport protein YE1478, found in Yersinia enterocolitica serotype O:8 / biotype 1B (strain NCTC 13174 / 8081).